Here is a 248-residue protein sequence, read N- to C-terminus: MHFSTLFGAAATAALAGSTNASPLARRQVPVGTPILQCTQPGLVALTYDDGPFTFTPQLLDILKQNDVRATFFVNGNNWANIEAGSNPDTIRRMRADGHLVGSHTYAHPDLNTLSSADRISQMRHVEEATRRIDGFAPKYMRAPYLSCDAGCQGDLGGLGYHIIDTNLDTKDYENNKPETTHLSAEKFNNELSADVGANSYIVLSHDVHEQTVVSLTQKLIDTLKSKGYRAVTVGECLGDAPENWYKA.

The N-terminal stretch at 1-26 (MHFSTLFGAAATAALAGSTNASPLAR) is a signal peptide. 2 disulfides stabilise this stretch: Cys38/Cys237 and Cys148/Cys152. The NodB homology domain occupies 42–232 (GLVALTYDDG…TLKSKGYRAV (191 aa)). Asp49 functions as the Proton acceptor in the catalytic mechanism. Asp49 serves as a coordination point for acetate. Residues Asp50, His104, and His108 each contribute to the Co(2+) site. Tyr145 is an acetate binding site. The active-site Proton donor is the His206.

The protein belongs to the polysaccharide deacetylase family. Monomer. Co(2+) serves as cofactor. In terms of processing, N-glycosylated.

The protein resides in the secreted. The enzyme catalyses [(1-&gt;4)-N-acetyl-beta-D-glucosaminyl](n) + n H2O = chitosan + n acetate. Its function is as follows. Hydrolyzes the N-acetamido groups of N-acetyl-D-glucosamine polymers in chitin to form chitosan and acetate. May play a role in evasion of the host immune response; plant chitinases liberate chitin molecules from the fungal cell wall which act as elicitors of the plant immune response, deacetylation of the liberated chitin neutralizes elicitor activity. The polypeptide is Chitin deacetylase (Colletotrichum lindemuthianum (Bean anthracnose fungus)).